We begin with the raw amino-acid sequence, 823 residues long: Protein FAM83G (823 aa).

Position 2 is an N-acetylalanine (alanine 2). A DUF1669 region spans residues 2–312 (AFSQVQCLDD…LYLMSHSVSL (311 aa)). Serine 4 carries the post-translational modification Phosphoserine. The interval 75–108 (DPGSEDPRGTGPSQGPEDNGVGDGEEASGADGVP) is disordered. 3 positions are modified to phosphoserine: serine 124, serine 127, and serine 356. Positions 450–823 (RDTSQASAQH…AQAPRDRKDP (374 aa)) are disordered. The segment covering 452-465 (TSQASAQHQLWKQS) has biased composition (polar residues). The span at 497 to 508 (DPEPLPPVPKPR) shows a compositional bias: pro residues. A compositionally biased stretch (basic and acidic residues) spans 529–543 (LPKEEAPQNGTDHRL). A compositionally biased stretch (acidic residues) spans 578 to 587 (GVEEEDDDDY). Phosphoserine occurs at positions 610, 614, 616, 650, and 666. 2 stretches are compositionally biased toward basic and acidic residues: residues 672 to 681 (RGREEADALK) and 809 to 823 (DSKR…RKDP).

It belongs to the FAM83 family. Interacts with SMAD1 (via MH2 domain); in a SMAD4-independent manner. Directly interacts (via DUF1669) with casein kinase isoforms CSNK1A1 and CSNK1A1L. In terms of processing, phosphorylated in vitro by CSNK1A1. Post-translationally, BMP signaling induces the phosphorylation by BMPR1A at Ser-610, Ser-614 and Ser-616. Phosphorylation at Ser-610 is necessary for the activation of SMAD4-independent BMP target genes such as NEDD9 and ASNS.

The protein resides in the cytoplasm. It is found in the cytosol. The protein localises to the nucleus. Functionally, substrate for type I BMP receptor kinase involved in regulation of some target genes of the BMP signaling pathway. Also regulates the expression of several non-BMP target genes, suggesting a role in other signaling pathways. This Homo sapiens (Human) protein is Protein FAM83G (FAM83G).